The primary structure comprises 434 residues: MPIITDVYAREVLDSRGNPTIEVEVFTESGALGRALVPSGASTGEHEAVELRDGDKDRYMGKGVLKAVENVNEIIAPEIIEGDFSVLDQVSIDKMMIALDGTDNKGKLGANAILGVSIAVARAAADYLGVPLYKYLGGFNGTELPVPMMNIVNGGSHSDAPIAFQEFMVLPVGAPNFKEALRWGAEIFHNLAKILKGRNLSTAVGDEGGFAPTFEGTEDAVETILEAIKAAGLEPGKDVFLGFDCAASEFFENGVYDYAKFEGENGKKRTSSEQVDYLEELVDKYPIITIEDGMDENDWEGWKALTDRLGNKVQLVGDDLFVTNTKILERGINEGVGNSILIKVNQIGTLTETFEAIEMAQKAGYTAVVSHRSGETEDTTIADIAVATNAGQIKTGSLSRTDRIAKYNQLLRIEDELFETAKFKGLNAFYNLNK.

Gln-165 lines the (2R)-2-phosphoglycerate pocket. The Proton donor role is filled by Glu-207. Asp-244, Glu-291, and Asp-318 together coordinate Mg(2+). Lys-343, Arg-372, Ser-373, and Lys-394 together coordinate (2R)-2-phosphoglycerate. Residue Lys-343 is the Proton acceptor of the active site.

The protein belongs to the enolase family. Mg(2+) is required as a cofactor.

The protein localises to the cytoplasm. It localises to the secreted. It is found in the cell surface. It carries out the reaction (2R)-2-phosphoglycerate = phosphoenolpyruvate + H2O. It functions in the pathway carbohydrate degradation; glycolysis; pyruvate from D-glyceraldehyde 3-phosphate: step 4/5. Catalyzes the reversible conversion of 2-phosphoglycerate (2-PG) into phosphoenolpyruvate (PEP). It is essential for the degradation of carbohydrates via glycolysis. The chain is Enolase from Macrococcus caseolyticus (strain JCSC5402) (Macrococcoides caseolyticum).